Reading from the N-terminus, the 63-residue chain is Protein Wfdc21 (63 aa).

The N-terminal stretch at 1–24 (MKLGAFLLLVSLITLSLEVQELQA) is a signal peptide. The 39-residue stretch at 25-63 (AVRPLQLLGTCAELCRGDWDCGPEEQCVSIGCSHICTTN) folds into the WAP; atypical domain. 3 disulfide bridges follow: C35–C56, C39–C51, and C45–C60.

As to expression, predominantly expressed in white adipose tissue and liver.

The protein resides in the secreted. May promote activation of the metalloproteinase MMP2. This chain is Protein Wfdc21, found in Mus musculus (Mouse).